Here is a 1768-residue protein sequence, read N- to C-terminus: Callose synthase 11 (1768 aa).

Residues 1-308 (MRRQRPSVAT…WNVYRSFDRL (308 aa)) lie on the Cytoplasmic side of the membrane. The helical transmembrane segment at 309 to 329 (WILLLLYLQAAIIVATSDVKF) threads the bilayer. The Extracellular portion of the chain corresponds to 330–335 (PWQDRD). The chain crosses the membrane as a helical span at residues 336–356 (VEVALLTVFISWAGLRLLQSV). At 357 to 370 (LDASTQYSLVSRET) the chain is on the cytoplasmic side. Residues 371-391 (YWLFIRLTLKFVVAVAWTVLF) form a helical membrane-spanning segment. Residues 392–421 (SVFYARIWSQKNKDGVWSRAANERVVTFLK) lie on the Extracellular side of the membrane. Residues 422-442 (VVFVYVIPELLALVLFIVPCI) form a helical membrane-spanning segment. The Cytoplasmic portion of the chain corresponds to 443–480 (RNWVEELNLGVVYFLTWWFYSKTFVGRGMREGLVDNVK). Residues 481–501 (YTLFWIIVLATKFIFSYFLQI) traverse the membrane as a helical segment. Topologically, residues 502 to 530 (RPLIAPTRALLNLKDATYNWHEFFGSTHR) are extracellular. A helical membrane pass occupies residues 531-551 (IAVGMLWLPVILVYLMDLQIW). Residues 552-1341 (YSIYSSLVGA…FFRMLSFFYT (790 aa)) are Cytoplasmic-facing. The helical transmembrane segment at 1342–1362 (TVGYYFNTMLIVFTVYAFLWG) threads the bilayer. The Extracellular portion of the chain corresponds to 1363–1386 (RLYLALSGVEKIAKDRSSSNEALG). A helical membrane pass occupies residues 1387 to 1407 (AILNQQFIIQLGLFTALPMIL). Residues 1408 to 1413 (ENSLER) are Cytoplasmic-facing. Residues 1414–1434 (GFLPAVWDFITMQLQLASFFY) form a helical membrane-spanning segment. The Extracellular portion of the chain corresponds to 1435 to 1481 (TFSMGTRTHYFGRTILHGGAKYRATGRGFVVEHKKFAENYRLYARTH). The helical transmembrane segment at 1482–1502 (FIKAIELAIILLVYAAYSPLA) threads the bilayer. Topologically, residues 1503–1508 (KSSFVY) are cytoplasmic. A helical membrane pass occupies residues 1509–1529 (ILMTISSWFLITSWIISPFLF). Residues 1530–1583 (NPSGFDWLKTVNDFDDFIAWLWSRGGLFTKADQSWFTWWNEEQEHLKTTGVWGK) are Extracellular-facing. Residues 1584-1604 (LLEIILDLRFFFFQYSIVYHL) traverse the membrane as a helical segment. Residues 1605–1612 (RIAENRTS) are Cytoplasmic-facing. The helical transmembrane segment at 1613-1633 (IGVYLISWGCIIGIVAIYITT) threads the bilayer. Topologically, residues 1634 to 1649 (IYAQKRYSVKEHIKYR) are extracellular. Residues 1650 to 1670 (FIQFLVILLTVLVVVMMLQFT) traverse the membrane as a helical segment. At 1671–1673 (KLT) the chain is on the cytoplasmic side. Residues 1674 to 1694 (VVDLLISLLAFVPTGWGLISI) form a helical membrane-spanning segment. The Extracellular portion of the chain corresponds to 1695-1719 (AQVLKPFLLSTVVWDTVISVARFYD). A helical membrane pass occupies residues 1720–1740 (LFFGLIVMAPVALLSWLPGFQ). Residues 1741 to 1768 (NMQTRILFNEAFSRGLQISIILAGKKST) are Cytoplasmic-facing.

The protein belongs to the glycosyltransferase 48 family. Ubiquitous.

The protein localises to the cell membrane. It carries out the reaction [(1-&gt;3)-beta-D-glucosyl](n) + UDP-alpha-D-glucose = [(1-&gt;3)-beta-D-glucosyl](n+1) + UDP + H(+). Required the formation of the callose wall separating the tetraspores (interstitial wall), but not for the callose wall surrounding the pollen mother cells (peripheral wall). Functionally redudant to CALS12 (GSL5). During plant growth and development, callose is found as a transitory component of the cell plate in dividing cells, is a major component of pollen mother cell walls and pollen tubes, and is found as a structural component of plasmodesmatal canals. The protein is Callose synthase 11 (CALS11) of Arabidopsis thaliana (Mouse-ear cress).